Reading from the N-terminus, the 590-residue chain is Arginine--tRNA ligase (590 aa).

The short motif at 132-142 is the 'HIGH' region element; sequence PNTNKPLHLGH.

The protein belongs to the class-I aminoacyl-tRNA synthetase family. As to quaternary structure, monomer.

The protein resides in the cytoplasm. It carries out the reaction tRNA(Arg) + L-arginine + ATP = L-arginyl-tRNA(Arg) + AMP + diphosphate. This chain is Arginine--tRNA ligase, found in Treponema denticola (strain ATCC 35405 / DSM 14222 / CIP 103919 / JCM 8153 / KCTC 15104).